Consider the following 192-residue polypeptide: Crossover junction endodeoxyribonuclease RuvC (192 aa).

Residues D8, E67, and D139 contribute to the active site. Residues D8, E67, and D139 each coordinate Mg(2+).

It belongs to the RuvC family. Homodimer which binds Holliday junction (HJ) DNA. The HJ becomes 2-fold symmetrical on binding to RuvC with unstacked arms; it has a different conformation from HJ DNA in complex with RuvA. In the full resolvosome a probable DNA-RuvA(4)-RuvB(12)-RuvC(2) complex forms which resolves the HJ. Mg(2+) is required as a cofactor.

It localises to the cytoplasm. It catalyses the reaction Endonucleolytic cleavage at a junction such as a reciprocal single-stranded crossover between two homologous DNA duplexes (Holliday junction).. Its function is as follows. The RuvA-RuvB-RuvC complex processes Holliday junction (HJ) DNA during genetic recombination and DNA repair. Endonuclease that resolves HJ intermediates. Cleaves cruciform DNA by making single-stranded nicks across the HJ at symmetrical positions within the homologous arms, yielding a 5'-phosphate and a 3'-hydroxyl group; requires a central core of homology in the junction. The consensus cleavage sequence is 5'-(A/T)TT(C/G)-3'. Cleavage occurs on the 3'-side of the TT dinucleotide at the point of strand exchange. HJ branch migration catalyzed by RuvA-RuvB allows RuvC to scan DNA until it finds its consensus sequence, where it cleaves and resolves the cruciform DNA. In Haemophilus ducreyi (strain 35000HP / ATCC 700724), this protein is Crossover junction endodeoxyribonuclease RuvC.